The chain runs to 1242 residues: Receptor-type adenylate cyclase GRESAG 4.1 (1242 aa).

The Cytoplasmic portion of the chain corresponds to 1–39; the sequence is MHWQEGGGRGCVYTHGNCRRNLTARALQALQHVEALTCH. A helical membrane pass occupies residues 40-60; it reads YCVSLLHLLPLLLMWMPPVCA. Residues 61–862 lie on the Extracellular side of the membrane; that stretch reads DDSAVTVNVL…THTVTDSWNN (802 aa). 11 N-linked (GlcNAc...) asparagine glycosylation sites follow: asparagine 116, asparagine 289, asparagine 318, asparagine 338, asparagine 401, asparagine 534, asparagine 563, asparagine 603, asparagine 702, asparagine 741, and asparagine 818. The helical transmembrane segment at 863–883 threads the bilayer; that stretch reads FWVCIRLVIIYCPWCVPTHLP. Residues 884–1242 are Cytoplasmic-facing; that stretch reads AERRNNNRAP…PFYDMHLQEY (359 aa). The Guanylate cyclase domain maps to 901–1056; it reads TLIFTDIESS…RTPNMAARTE (156 aa). The Mg(2+) site is built by aspartate 906 and aspartate 949.

It belongs to the adenylyl cyclase class-3 family. The cofactor is Mg(2+).

Its subcellular location is the membrane. It catalyses the reaction ATP = 3',5'-cyclic AMP + diphosphate. Its function is as follows. Could act as a receptor for an unknown ligand. The chain is Receptor-type adenylate cyclase GRESAG 4.1 (GRESAG 4.1) from Trypanosoma brucei brucei.